The primary structure comprises 527 residues: Peptide chain release factor 3 (527 aa).

The region spanning 9 to 277 (AKRRTFAIIS…AVVNWAPKPL (269 aa)) is the tr-type G domain. Residues 18-25 (SHPDAGKT), 86-90 (DTPGH), and 140-143 (NKLD) each bind GTP.

It belongs to the TRAFAC class translation factor GTPase superfamily. Classic translation factor GTPase family. PrfC subfamily.

The protein localises to the cytoplasm. In terms of biological role, increases the formation of ribosomal termination complexes and stimulates activities of RF-1 and RF-2. It binds guanine nucleotides and has strong preference for UGA stop codons. It may interact directly with the ribosome. The stimulation of RF-1 and RF-2 is significantly reduced by GTP and GDP, but not by GMP. This is Peptide chain release factor 3 from Pseudomonas savastanoi pv. phaseolicola (strain 1448A / Race 6) (Pseudomonas syringae pv. phaseolicola (strain 1448A / Race 6)).